A 378-amino-acid chain; its full sequence is Dual-specificity RNA methyltransferase RlmN (378 aa).

Catalysis depends on glutamate 96, which acts as the Proton acceptor. Positions 102 to 342 (QGGRGTLCVS…VRTTRGDDID (241 aa)) constitute a Radical SAM core domain. Cysteine 109 and cysteine 345 are disulfide-bonded. Residues cysteine 116, cysteine 120, and cysteine 123 each coordinate [4Fe-4S] cluster. S-adenosyl-L-methionine is bound by residues 170–171 (GE), serine 202, 224–226 (SLH), and asparagine 302. Cysteine 345 functions as the S-methylcysteine intermediate in the catalytic mechanism.

The protein belongs to the radical SAM superfamily. RlmN family. [4Fe-4S] cluster is required as a cofactor.

Its subcellular location is the cytoplasm. The enzyme catalyses adenosine(2503) in 23S rRNA + 2 reduced [2Fe-2S]-[ferredoxin] + 2 S-adenosyl-L-methionine = 2-methyladenosine(2503) in 23S rRNA + 5'-deoxyadenosine + L-methionine + 2 oxidized [2Fe-2S]-[ferredoxin] + S-adenosyl-L-homocysteine. The catalysed reaction is adenosine(37) in tRNA + 2 reduced [2Fe-2S]-[ferredoxin] + 2 S-adenosyl-L-methionine = 2-methyladenosine(37) in tRNA + 5'-deoxyadenosine + L-methionine + 2 oxidized [2Fe-2S]-[ferredoxin] + S-adenosyl-L-homocysteine. In terms of biological role, specifically methylates position 2 of adenine 2503 in 23S rRNA and position 2 of adenine 37 in tRNAs. m2A2503 modification seems to play a crucial role in the proofreading step occurring at the peptidyl transferase center and thus would serve to optimize ribosomal fidelity. The polypeptide is Dual-specificity RNA methyltransferase RlmN (Pseudomonas paraeruginosa (strain DSM 24068 / PA7) (Pseudomonas aeruginosa (strain PA7))).